The sequence spans 126 residues: Glycine cleavage system H protein (126 aa).

A Lipoyl-binding domain is found at 22–104; sequence VATVGITEYA…YEKAWMVKIE (83 aa). K63 is subject to N6-lipoyllysine.

The protein belongs to the GcvH family. As to quaternary structure, the glycine cleavage system is composed of four proteins: P, T, L and H. Requires (R)-lipoate as cofactor.

The glycine cleavage system catalyzes the degradation of glycine. The H protein shuttles the methylamine group of glycine from the P protein to the T protein. In terms of biological role, is also involved in protein lipoylation via its role as an octanoyl/lipoyl carrier protein intermediate. The sequence is that of Glycine cleavage system H protein from Staphylococcus epidermidis (strain ATCC 12228 / FDA PCI 1200).